A 245-amino-acid chain; its full sequence is Small ribosomal subunit protein uS2 (245 aa).

It belongs to the universal ribosomal protein uS2 family.

The polypeptide is Small ribosomal subunit protein uS2 (Pseudomonas fluorescens (strain SBW25)).